We begin with the raw amino-acid sequence, 480 residues long: Chromosomal replication initiator protein DnaA (480 aa).

Residues 1–73 are domain I, interacts with DnaA modulators; sequence MNQDFWPFCL…GELGEEFHGQ (73 aa). Residues 73–143 are domain II; it reads QPIQLELQLP…SANELAYDKT (71 aa). A domain III, AAA+ region region spans residues 144–360; sequence RLNADFTFDT…GALNKVVAYA (217 aa). 4 residues coordinate ATP: G188, G190, K191, and T192. The segment at 361–480 is domain IV, binds dsDNA; the sequence is RFHGRGISLE…VHVLTQVLRG (120 aa).

It belongs to the DnaA family. In terms of assembly, oligomerizes as a right-handed, spiral filament on DNA at oriC.

It localises to the cytoplasm. In terms of biological role, plays an essential role in the initiation and regulation of chromosomal replication. ATP-DnaA binds to the origin of replication (oriC) to initiate formation of the DNA replication initiation complex once per cell cycle. Binds the DnaA box (a 9 base pair repeat at the origin) and separates the double-stranded (ds)DNA. Forms a right-handed helical filament on oriC DNA; dsDNA binds to the exterior of the filament while single-stranded (ss)DNA is stabiized in the filament's interior. The ATP-DnaA-oriC complex binds and stabilizes one strand of the AT-rich DNA unwinding element (DUE), permitting loading of DNA polymerase. After initiation quickly degrades to an ADP-DnaA complex that is not apt for DNA replication. Binds acidic phospholipids. This chain is Chromosomal replication initiator protein DnaA, found in Azoarcus sp. (strain BH72).